A 609-amino-acid chain; its full sequence is Heat shock factor protein (609 aa).

A compositionally biased stretch (polar residues) spans 1–33; that stretch reads MIQTASTISSNGGTNQGMESSSANSPEMNGTQN. The segment at 1–47 is disordered; that stretch reads MIQTASTISSNGGTNQGMESSSANSPEMNGTQNSMSVGMSGSGSSQN. Residues 34–45 show a composition bias toward low complexity; it reads SMSVGMSGSGSS. A DNA-binding region spans residues 50-156; that stretch reads ITQFSNKLYN…LLCLVTRKKA (107 aa). Disordered regions lie at residues 255 to 298, 310 to 371, 411 to 445, and 567 to 609; these read PTVS…GKYR, SSFN…TDPK, NNTS…QPVQ, and SNGN…SIGA. Polar residues-rich tracts occupy residues 257–277, 339–360, 422–443, and 567–597; these read VSPT…TTAN, DSFN…TDVP, YRGS…NLQP, and SNGN…SSPR. Serine 350 carries the phosphoserine modification. Over residues 598–609 the composition is skewed to basic residues; that stretch reads QVRKKRKSSIGA.

This sequence belongs to the HSF family. In terms of assembly, homotrimer.

The protein localises to the nucleus. DNA-binding protein that specifically binds heat shock promoter elements (HSE) and activates transcription. Also required for growth at normal temperatures. This is Heat shock factor protein (hsf1) from Schizosaccharomyces pombe (strain 972 / ATCC 24843) (Fission yeast).